Consider the following 719-residue polypeptide: Probable 1-deoxy-D-xylulose-5-phosphate synthase, chloroplastic (719 aa).

The N-terminal 57 residues, 1–57 (MALCAYAFPGILNRTVAVASDASKPTPLFSEWIHGTDLQFQFHQKLTQVKKRSRTVQ), are a transit peptide targeting the chloroplast. Thiamine diphosphate contacts are provided by residues His145 and 186 to 188 (GHS). Asp217 lines the Mg(2+) pocket. Residues 218–219 (GA), Asn246, Tyr367, and Glu449 each bind thiamine diphosphate. Asn246 contacts Mg(2+).

Belongs to the transketolase family. DXPS subfamily. In terms of assembly, homodimer. Mg(2+) is required as a cofactor. The cofactor is thiamine diphosphate.

Its subcellular location is the plastid. It localises to the chloroplast. The catalysed reaction is D-glyceraldehyde 3-phosphate + pyruvate + H(+) = 1-deoxy-D-xylulose 5-phosphate + CO2. Its pathway is metabolic intermediate biosynthesis; 1-deoxy-D-xylulose 5-phosphate biosynthesis; 1-deoxy-D-xylulose 5-phosphate from D-glyceraldehyde 3-phosphate and pyruvate: step 1/1. Catalyzes the acyloin condensation reaction between C atoms 2 and 3 of pyruvate and glyceraldehyde 3-phosphate to yield 1-deoxy-D-xylulose-5-phosphate (DXP). The chain is Probable 1-deoxy-D-xylulose-5-phosphate synthase, chloroplastic (TKT2) from Capsicum annuum (Capsicum pepper).